We begin with the raw amino-acid sequence, 280 residues long: MVSSTRSEHSFAGVGGVRIVYDVWTPDTDPRGVVVLAHGYAEHAGRYHHVAQRFGAAGLLVYALDHRGHGRSGGKRVHLRDLSEFVEDFRTLVGIAANDHPTLPRIVLGHSMGGGIVFAYGARYPGEYSAMVLSGPAVNAHDGVSPVLVAVAKVLGKLAPGIPVENLDADAVSRDPEVVAAYKADPMVHHGKLPAGIARALIGLGQSMPQRAAALTAPLLVVHGDKDRLIPVAGSRLLVDRVASEDVHLKVYPGLYHEVFNEPEQKLVLDDVTSWIVSHL.

Ser-111 (nucleophile) is an active-site residue. Residues Asp-227 and His-257 each act as charge relay system in the active site.

The protein belongs to the AB hydrolase superfamily.

Its subcellular location is the secreted. It localises to the cell wall. It carries out the reaction Hydrolyzes glycerol monoesters of long-chain fatty acids.. In terms of biological role, contributes to cell growth, probably by hydrolyzing exogenous lipids. Catalyzes the hydrolysis of monoacylglycerols (MAG) with fatty acid chains ranging from C14 to C18, with a maximum activity on monoolein. Is unable to hydrolyze long-chain diacylglycerol (DAG). In Mycolicibacterium smegmatis (strain ATCC 700084 / mc(2)155) (Mycobacterium smegmatis), this protein is Monoacylglycerol lipase.